A 295-amino-acid polypeptide reads, in one-letter code: Elongation factor Ts (295 aa).

The interval 80–83 is involved in Mg(2+) ion dislocation from EF-Tu; sequence TDFV.

Belongs to the EF-Ts family.

Its subcellular location is the cytoplasm. Associates with the EF-Tu.GDP complex and induces the exchange of GDP to GTP. It remains bound to the aminoacyl-tRNA.EF-Tu.GTP complex up to the GTP hydrolysis stage on the ribosome. The sequence is that of Elongation factor Ts from Lysinibacillus sphaericus (strain C3-41).